The chain runs to 458 residues: Lysine-rich nucleolar protein 1 (458 aa).

Residues 1-14 show a composition bias toward basic and acidic residues; it reads MITKTHKVDLGLPE. A disordered region spans residues 1 to 21; the sequence is MITKTHKVDLGLPEKKKKKKV. Lys-7 participates in a covalent cross-link: Glycyl lysine isopeptide (Lys-Gly) (interchain with G-Cter in SUMO2). Phosphoserine is present on residues Ser-42 and Ser-50. Positions 46–305 are disordered; the sequence is ATSPSKSVAH…ESGVAGDPWK (260 aa). The segment covering 64 to 73 has biased composition (basic residues); sequence VKKKKKKKKG. Residue Lys-101 forms a Glycyl lysine isopeptide (Lys-Gly) (interchain with G-Cter in SUMO2) linkage. The residue at position 111 (Ser-111) is a Phosphoserine. Lys-130 is covalently cross-linked (Glycyl lysine isopeptide (Lys-Gly) (interchain with G-Cter in SUMO2)). Ser-132 is subject to Phosphoserine. A compositionally biased stretch (basic residues) spans 145 to 155; it reads GKKLKKHKKEK. Positions 173 to 192 are enriched in basic and acidic residues; the sequence is EAREARDVGDTCSVGKKDEE. The span at 198-218 shows a compositional bias: basic residues; it reads QKRKRKSPREHNGKVKKKKKI. Residue Lys-249 forms a Glycyl lysine isopeptide (Lys-Gly) (interchain with G-Cter in SUMO1); alternate linkage. A Glycyl lysine isopeptide (Lys-Gly) (interchain with G-Cter in SUMO2); alternate cross-link involves residue Lys-249. Ser-265 carries the phosphoserine modification. Positions 265–274 are enriched in basic residues; the sequence is SAKKKMKSKK. Residues Lys-275, Lys-287, and Lys-305 each participate in a glycyl lysine isopeptide (Lys-Gly) (interchain with G-Cter in SUMO2) cross-link. Residues 306–458 are interaction with ZNF106; it reads EETDTDLEVV…NASKSVKLED (153 aa). A phosphothreonine mark is found at Thr-308 and Thr-310. Residues Lys-319, Lys-353, Lys-373, Lys-375, and Lys-407 each participate in a glycyl lysine isopeptide (Lys-Gly) (interchain with G-Cter in SUMO2) cross-link. Basic and acidic residues predominate over residues 336–353; it reads QEEIDRESGKTEASETRK. Residues 336–355 are disordered; the sequence is QEEIDRESGKTEASETRKWT. Residue Arg-430 is modified to Omega-N-methylarginine. Residue Lys-442 forms a Glycyl lysine isopeptide (Lys-Gly) (interchain with G-Cter in SUMO2) linkage.

Interacts with ZNF106.

The protein localises to the nucleus. The protein resides in the nucleolus. The polypeptide is Lysine-rich nucleolar protein 1 (KNOP1) (Homo sapiens (Human)).